Consider the following 450-residue polypeptide: Cysteine protease ATG4C (450 aa).

Residue Cys-112 is the Nucleophile of the active site. Catalysis depends on residues Asp-336 and His-338.

The protein belongs to the peptidase C54 family.

It localises to the cytoplasm. It carries out the reaction [protein]-C-terminal L-amino acid-glycyl-phosphatidylethanolamide + H2O = [protein]-C-terminal L-amino acid-glycine + a 1,2-diacyl-sn-glycero-3-phosphoethanolamine. Functionally, cysteine protease that plays a key role in autophagy by mediating both proteolytic activation and delipidation of ATG8 family proteins. The protease activity is required for proteolytic activation of ATG8 family proteins: cleaves the C-terminal amino acid of ATG8 proteins to reveal a C-terminal glycine. Exposure of the glycine at the C-terminus is essential for ATG8 proteins conjugation to phosphatidylethanolamine (PE) and insertion to membranes, which is necessary for autophagy. In addition to the protease activity, also mediates delipidation of ATG8 family proteins. Catalyzes delipidation of PE-conjugated forms of ATG8 proteins during macroautophagy. The sequence is that of Cysteine protease ATG4C from Xenopus laevis (African clawed frog).